Here is a 150-residue protein sequence, read N- to C-terminus: Ribosomal RNA large subunit methyltransferase H (150 aa).

S-adenosyl-L-methionine is bound by residues Ala100 and 118–123; that span reads LSEMTF.

Belongs to the RNA methyltransferase RlmH family. In terms of assembly, homodimer.

The protein resides in the cytoplasm. It carries out the reaction pseudouridine(1915) in 23S rRNA + S-adenosyl-L-methionine = N(3)-methylpseudouridine(1915) in 23S rRNA + S-adenosyl-L-homocysteine + H(+). Its function is as follows. Specifically methylates the pseudouridine at position 1915 (m3Psi1915) in 23S rRNA. In Helicobacter pylori (strain Shi470), this protein is Ribosomal RNA large subunit methyltransferase H.